The following is a 432-amino-acid chain: Gamma-glutamyl phosphate reductase (432 aa).

It belongs to the gamma-glutamyl phosphate reductase family.

It localises to the cytoplasm. It carries out the reaction L-glutamate 5-semialdehyde + phosphate + NADP(+) = L-glutamyl 5-phosphate + NADPH + H(+). The protein operates within amino-acid biosynthesis; L-proline biosynthesis; L-glutamate 5-semialdehyde from L-glutamate: step 2/2. Functionally, catalyzes the NADPH-dependent reduction of L-glutamate 5-phosphate into L-glutamate 5-semialdehyde and phosphate. The product spontaneously undergoes cyclization to form 1-pyrroline-5-carboxylate. This is Gamma-glutamyl phosphate reductase from Methylorubrum extorquens (strain CM4 / NCIMB 13688) (Methylobacterium extorquens).